The following is a 40-amino-acid chain: Photosystem II reaction center protein J (40 aa).

A helical transmembrane segment spans residues 8–28 (IPLWIIGTVAGIPVIGLIGIF).

The protein belongs to the PsbJ family. As to quaternary structure, PSII is composed of 1 copy each of membrane proteins PsbA, PsbB, PsbC, PsbD, PsbE, PsbF, PsbH, PsbI, PsbJ, PsbK, PsbL, PsbM, PsbT, PsbX, PsbY, PsbZ, Psb30/Ycf12, at least 3 peripheral proteins of the oxygen-evolving complex and a large number of cofactors. It forms dimeric complexes.

The protein resides in the plastid. It is found in the chloroplast thylakoid membrane. Its function is as follows. One of the components of the core complex of photosystem II (PSII). PSII is a light-driven water:plastoquinone oxidoreductase that uses light energy to abstract electrons from H(2)O, generating O(2) and a proton gradient subsequently used for ATP formation. It consists of a core antenna complex that captures photons, and an electron transfer chain that converts photonic excitation into a charge separation. The polypeptide is Photosystem II reaction center protein J (Pelargonium hortorum (Common geranium)).